Consider the following 360-residue polypeptide: Peptide chain release factor 1 (360 aa).

An N5-methylglutamine modification is found at Gln-236.

It belongs to the prokaryotic/mitochondrial release factor family. In terms of processing, methylated by PrmC. Methylation increases the termination efficiency of RF1.

Its subcellular location is the cytoplasm. Peptide chain release factor 1 directs the termination of translation in response to the peptide chain termination codons UAG and UAA. This is Peptide chain release factor 1 from Ligilactobacillus salivarius (strain UCC118) (Lactobacillus salivarius).